The following is a 654-amino-acid chain: C6 finger domain transcription factor nscR (654 aa).

The zn(2)-C6 fungal-type DNA-binding region spans 17-43 (CELCRERKVKCDKLDPCTNCSSAGVIC).

It localises to the nucleus. In terms of biological role, transcription factor that specifically regulates the neosartoricin B biosynthesis gene cluster. This chain is C6 finger domain transcription factor nscR, found in Trichophyton verrucosum (strain HKI 0517).